We begin with the raw amino-acid sequence, 246 residues long: 5-oxoprolinase subunit A (246 aa).

Belongs to the LamB/PxpA family. Forms a complex composed of PxpA, PxpB and PxpC.

It catalyses the reaction 5-oxo-L-proline + ATP + 2 H2O = L-glutamate + ADP + phosphate + H(+). In terms of biological role, catalyzes the cleavage of 5-oxoproline to form L-glutamate coupled to the hydrolysis of ATP to ADP and inorganic phosphate. This Cupriavidus necator (strain ATCC 17699 / DSM 428 / KCTC 22496 / NCIMB 10442 / H16 / Stanier 337) (Ralstonia eutropha) protein is 5-oxoprolinase subunit A.